A 389-amino-acid chain; its full sequence is Alcohol dehydrogenase-like 5 (389 aa).

Positions 54, 56, 77, 107, 110, 113, 121, and 186 each coordinate Zn(2+). The an alcohol site is built by Thr56 and His77. Thr56 contributes to the NAD(+) binding site. NAD(+) is bound by residues 211 to 216, Asp235, Lys240, 305 to 307, Phe332, and Arg382; these read GLGAVG and LGI.

The protein belongs to the zinc-containing alcohol dehydrogenase family. Class-III subfamily. As to quaternary structure, homodimer. Zn(2+) is required as a cofactor.

It localises to the cytoplasm. It carries out the reaction a primary alcohol + NAD(+) = an aldehyde + NADH + H(+). The enzyme catalyses a secondary alcohol + NAD(+) = a ketone + NADH + H(+). The polypeptide is Alcohol dehydrogenase-like 5 (Arabidopsis thaliana (Mouse-ear cress)).